The sequence spans 145 residues: MRVVLQRVKEASVTIEGQVVGQIGQGYLLLVGFGPDDTEETLDYMVHKITNLRVFESEPGKMNLGLKDVDGAILSVSQFTLYADVKHGNRPGFSNAAKPSLAEPLYQRFNEKLAATGIPVATGQFGADMQVALVNDGPVTIWYEK.

Residues 137–138 carry the Gly-cisPro motif, important for rejection of L-amino acids motif; the sequence is GP.

It belongs to the DTD family. As to quaternary structure, homodimer.

It localises to the cytoplasm. The catalysed reaction is glycyl-tRNA(Ala) + H2O = tRNA(Ala) + glycine + H(+). The enzyme catalyses a D-aminoacyl-tRNA + H2O = a tRNA + a D-alpha-amino acid + H(+). An aminoacyl-tRNA editing enzyme that deacylates mischarged D-aminoacyl-tRNAs. Also deacylates mischarged glycyl-tRNA(Ala), protecting cells against glycine mischarging by AlaRS. Acts via tRNA-based rather than protein-based catalysis; rejects L-amino acids rather than detecting D-amino acids in the active site. By recycling D-aminoacyl-tRNA to D-amino acids and free tRNA molecules, this enzyme counteracts the toxicity associated with the formation of D-aminoacyl-tRNA entities in vivo and helps enforce protein L-homochirality. This Limosilactobacillus fermentum (strain NBRC 3956 / LMG 18251) (Lactobacillus fermentum) protein is D-aminoacyl-tRNA deacylase.